The chain runs to 436 residues: UDP-N-acetylmuramate--L-alanine ligase (436 aa).

Residue 108 to 114 participates in ATP binding; the sequence is GAHGKTS.

The protein belongs to the MurCDEF family.

The protein localises to the cytoplasm. The enzyme catalyses UDP-N-acetyl-alpha-D-muramate + L-alanine + ATP = UDP-N-acetyl-alpha-D-muramoyl-L-alanine + ADP + phosphate + H(+). It participates in cell wall biogenesis; peptidoglycan biosynthesis. Functionally, cell wall formation. This is UDP-N-acetylmuramate--L-alanine ligase from Bacillus cytotoxicus (strain DSM 22905 / CIP 110041 / 391-98 / NVH 391-98).